Reading from the N-terminus, the 483-residue chain is UDP-N-acetylmuramyl-tripeptide synthetase (483 aa).

Serine 43 contacts UDP-N-acetyl-alpha-D-muramoyl-L-alanyl-D-glutamate. Glycine 116–threonine 122 lines the ATP pocket. Residues threonine 160–threonine 161, serine 187, and arginine 195 contribute to the UDP-N-acetyl-alpha-D-muramoyl-L-alanyl-D-glutamate site. At lysine 229 the chain carries N6-carboxylysine.

It belongs to the MurCDEF family. MurE subfamily. Post-translationally, carboxylation is probably crucial for Mg(2+) binding and, consequently, for the gamma-phosphate positioning of ATP.

The protein resides in the cytoplasm. Its pathway is cell wall biogenesis; peptidoglycan biosynthesis. In terms of biological role, catalyzes the addition of an amino acid to the nucleotide precursor UDP-N-acetylmuramoyl-L-alanyl-D-glutamate (UMAG) in the biosynthesis of bacterial cell-wall peptidoglycan. The chain is UDP-N-acetylmuramyl-tripeptide synthetase from Lactococcus lactis subsp. cremoris (strain MG1363).